The sequence spans 332 residues: Potassium channel subfamily K member 17 (332 aa).

The Cytoplasmic segment spans residues 1–20; the sequence is MYRPRARAAPEGRVRGCAVP. A helical transmembrane segment spans residues 21–43; it reads STVLLLLAYLAYLALGTGVFWTL. N65 and N94 each carry an N-linked (GlcNAc...) asparagine glycan. The pore-forming intramembrane region spans 106-124; that stretch reads SFFFSVSTITTIGYGNLSP. K(+) is bound by residues T116, I117, G118, and Y119. The tract at residues 116–121 is selectivity filter 1; sequence TIGYGN. The chain crosses the membrane as a helical span at residues 128-148; that stretch reads AARLFCIFFALVGIPLNLVVL. The Cytoplasmic portion of the chain corresponds to 149 to 179; the sequence is NRLGHLMQQGVNHWASRLGGTWQDPDKARWL. Residues 180-200 traverse the membrane as a helical segment; it reads AGSGALLSGLLLFLLLPPLLF. The segment at residues 211–230 is an intramembrane region (pore-forming); the sequence is GFYFAFITLSTVGFGDYVIG. Positions 221, 222, 223, and 224 each coordinate K(+). The selectivity filter 2 stretch occupies residues 221 to 226; the sequence is TVGFGD. The helical transmembrane segment at 244-264 threads the bilayer; it reads MVSLWILFGMAWLALIIKLIL. Residues 265-332 are Cytoplasmic-facing; sequence SQLETPGRVC…AHAAGCGKDS (68 aa). The disordered stretch occupies residues 287–312; the sequence is SQSWRQGPDREPESHSPQQGCYPEGP.

Belongs to the two pore domain potassium channel (TC 1.A.1.8) family. As to quaternary structure, homodimer; disulfide-linked. Heterodimer with KCNK5 and KCNK16. In terms of tissue distribution, widely expressed. Highly expressed in aorta and coronary artery. Expressed in pancreas, in both endocrine (alpha, beta, gamma, delta, and epsilon) and exocrine (acinar and ductal) cells.

The protein localises to the cell membrane. The enzyme catalyses K(+)(in) = K(+)(out). It catalyses the reaction Rb(+)(in) = Rb(+)(out). It carries out the reaction Cs(+)(in) = Cs(+)(out). Inhibited by Ba(2+), quinidine, chloroform and halothane. Activated at alkaline pH. Activated by quinine and isoflurane. K(+) channel that conducts voltage-dependent outward rectifying currents upon membrane depolarization. Voltage sensing is coupled to K(+) electrochemical gradient in an 'ion flux gating' mode where outward but not inward ion flow opens the gate. Homo- and heterodimerizes to form functional channels with distinct regulatory and gating properties. Present in the cardiac conduction system where it may regulate action potential duration and beating frequency of cardiac myocytes. Permeable to other monovalent cations such as Rb(+) and Cs(+). In Homo sapiens (Human), this protein is Potassium channel subfamily K member 17.